The chain runs to 74 residues: Translation initiation factor IF-1 (74 aa).

An S1-like domain is found at 1–72 (MAKQDAIEME…TKGRITYRLR (72 aa)).

Belongs to the IF-1 family. In terms of assembly, component of the 30S ribosomal translation pre-initiation complex which assembles on the 30S ribosome in the order IF-2 and IF-3, IF-1 and N-formylmethionyl-tRNA(fMet); mRNA recruitment can occur at any time during PIC assembly.

It localises to the cytoplasm. One of the essential components for the initiation of protein synthesis. Stabilizes the binding of IF-2 and IF-3 on the 30S subunit to which N-formylmethionyl-tRNA(fMet) subsequently binds. Helps modulate mRNA selection, yielding the 30S pre-initiation complex (PIC). Upon addition of the 50S ribosomal subunit IF-1, IF-2 and IF-3 are released leaving the mature 70S translation initiation complex. This is Translation initiation factor IF-1 from Acaryochloris marina (strain MBIC 11017).